The following is a 357-amino-acid chain: Nicotinate-nucleotide--dimethylbenzimidazole phosphoribosyltransferase (357 aa).

Residue Glu-323 is the Proton acceptor of the active site.

It belongs to the CobT family.

It carries out the reaction 5,6-dimethylbenzimidazole + nicotinate beta-D-ribonucleotide = alpha-ribazole 5'-phosphate + nicotinate + H(+). It functions in the pathway nucleoside biosynthesis; alpha-ribazole biosynthesis; alpha-ribazole from 5,6-dimethylbenzimidazole: step 1/2. Its function is as follows. Catalyzes the synthesis of alpha-ribazole-5'-phosphate from nicotinate mononucleotide (NAMN) and 5,6-dimethylbenzimidazole (DMB). This chain is Nicotinate-nucleotide--dimethylbenzimidazole phosphoribosyltransferase, found in Nitratidesulfovibrio vulgaris (strain ATCC 29579 / DSM 644 / CCUG 34227 / NCIMB 8303 / VKM B-1760 / Hildenborough) (Desulfovibrio vulgaris).